The following is a 455-amino-acid chain: Chitin deacetylase 2 (455 aa).

A signal peptide spans 1–19 (MIPSTAAALLTLTAGAAFA). N86, N98, N122, and N142 each carry an N-linked (GlcNAc...) asparagine glycan. Residues 157 to 347 (MTWGLGFDDG…IKSAFNYIVP (191 aa)) enclose the NodB homology domain. D164 serves as the catalytic Proton acceptor. Acetate is bound at residue D164. D165 is a Co(2+) binding site. An N-linked (GlcNAc...) asparagine glycan is attached at N168. 2 residues coordinate Co(2+): H214 and H218. Position 255 (Y255) interacts with acetate. N-linked (GlcNAc...) asparagine glycans are attached at residues N270 and N308. The active-site Proton donor is the H321. N325, N353, N362, and N377 each carry an N-linked (GlcNAc...) asparagine glycan. The tract at residues 381–423 (STTQKDGSSSTNTASGSGAAGSASATSSSDDSSSSGGSSGSSG) is disordered. N426 carries N-linked (GlcNAc...) asparagine glycosylation. The GPI-anchor amidated serine moiety is linked to residue S429. The propeptide at 430 to 455 (GALGMFDSLSGVGLILGGVVAGVMLL) is removed in mature form.

The protein belongs to the polysaccharide deacetylase family. Co(2+) is required as a cofactor. In terms of processing, the GPI anchor is required for the attachment to the cell membrane but not for cell surface targeting.

The protein resides in the secreted. It is found in the cell wall. Its subcellular location is the cell membrane. The enzyme catalyses [(1-&gt;4)-N-acetyl-beta-D-glucosaminyl](n) + n H2O = chitosan + n acetate. Hydrolyzes the N-acetamido groups of N-acetyl-D-glucosamine residues in chitin to form chitosan and acetate. Chitosan is required to anchor melanin to the cell wall, for maintenance of cell wall integrity, and for proper cytokinesis. Chitosan offers an advantage during infection as it is less readily detected than chitin by host immunosurveillance mechanisms. The sequence is that of Chitin deacetylase 2 from Cryptococcus neoformans var. grubii serotype A (strain H99 / ATCC 208821 / CBS 10515 / FGSC 9487) (Filobasidiella neoformans var. grubii).